Here is a 375-residue protein sequence, read N- to C-terminus: Chaperone protein DnaJ (375 aa).

In terms of domain architecture, J spans 5-68; it reads DYYEILGVSK…KKRAQYDQFG (64 aa). Residues 135–217 form a CR-type zinc finger; sequence GISKNINYDR…CYGKKVINER (83 aa). Residues Cys148, Cys151, Cys165, Cys168, Cys191, Cys194, Cys205, and Cys208 each contribute to the Zn(2+) site. CXXCXGXG motif repeat units lie at residues 148-155, 165-172, 191-198, and 205-212; these read CHKCQGTG, CTKCHGRG, CHECEGTG, and CEQCYGKK.

This sequence belongs to the DnaJ family. In terms of assembly, homodimer. The cofactor is Zn(2+).

It is found in the cytoplasm. Functionally, participates actively in the response to hyperosmotic and heat shock by preventing the aggregation of stress-denatured proteins and by disaggregating proteins, also in an autonomous, DnaK-independent fashion. Unfolded proteins bind initially to DnaJ; upon interaction with the DnaJ-bound protein, DnaK hydrolyzes its bound ATP, resulting in the formation of a stable complex. GrpE releases ADP from DnaK; ATP binding to DnaK triggers the release of the substrate protein, thus completing the reaction cycle. Several rounds of ATP-dependent interactions between DnaJ, DnaK and GrpE are required for fully efficient folding. Also involved, together with DnaK and GrpE, in the DNA replication of plasmids through activation of initiation proteins. The polypeptide is Chaperone protein DnaJ (Ureaplasma parvum serovar 3 (strain ATCC 700970)).